The following is a 62-amino-acid chain: Large ribosomal subunit protein uL30 (62 aa).

The protein belongs to the universal ribosomal protein uL30 family. In terms of assembly, part of the 50S ribosomal subunit.

This chain is Large ribosomal subunit protein uL30, found in Marinobacter nauticus (strain ATCC 700491 / DSM 11845 / VT8) (Marinobacter aquaeolei).